Reading from the N-terminus, the 785-residue chain is uncharacterized protein (785 aa).

One can recognise a DOD-type homing endonuclease domain in the interval 293 to 421 (LVGYFLSEGY…LRLISLRLGF (129 aa)).

Post-translationally, this protein undergoes a protein self splicing that involves a post-translational excision of the intervening region (intein) followed by peptide ligation.

This is an uncharacterized protein from Methanocaldococcus jannaschii (strain ATCC 43067 / DSM 2661 / JAL-1 / JCM 10045 / NBRC 100440) (Methanococcus jannaschii).